Here is an 89-residue protein sequence, read N- to C-terminus: OMEGA-ectatommitoxin(02)-Rm1a (89 aa).

An N-terminal signal peptide occupies residues 1-30 (MKDSYISIVIAYLMVTFILVSSMPIEGEKG). 3 disulfides stabilise this stretch: cysteine 39-cysteine 52, cysteine 47-cysteine 68, and cysteine 70-cysteine 79. Residues 43–80 (YANYCFNGKCVHVVAQDEPGKPCYSCICDKFYIGKRCG) form the EGF-like domain.

This sequence belongs to the EGF domain peptide family. In terms of tissue distribution, expressed by the venom gland.

It is found in the secreted. Ant peptide with probable defensive activity which acts as a potent agonist of the mammalian epidermal growth factor receptor (EGFR). Mimics, both structurally and functionally, vertebrate epidermal growth factor (EGF) peptide hormones. In vivo, intraplantar injection in mice causes long-lasting (several days) hypersensitivity of the injected paw to both mechanical and thermal stimuli. Its long-lasting effect is unusual for venom toxins whose effects are usually immediate. One possible explanation is that it would reduce the duration of a nest attack, discourage future attacks, or enhance the actions of subsequent exposure to other pain-inducing venom peptides. The polypeptide is OMEGA-ectatommitoxin(02)-Rm1a (Rhytidoponera metallica (Australian green-headed ant)).